The sequence spans 465 residues: Citrate synthase-like protein (465 aa).

Residues 13-40 form a disordered region; the sequence is HISDMVDSTKMNGNQSQDTAGRADTPVS. Residues 21–31 are compositionally biased toward polar residues; it reads TKMNGNQSQDT. Residues histidine 357 and aspartate 413 contribute to the active site.

It belongs to the citrate synthase family.

It functions in the pathway secondary metabolite biosynthesis. Functionally, citrate synthase-like protein; part of the gene cluster that mediates the biosynthesis of squalestatin S1 (SQS1, also known as zaragozic acid A), a heavily oxidized fungal polyketide that offers potent cholesterol lowering activity by targeting squalene synthase (SS). SQS1 is composed of a 2,8-dioxobicyclic[3.2.1]octane-3,4,5-tricarboxyclic acid core that is connected to two lipophilic polyketide arms. These initial steps feature the priming of an unusual benzoic acid starter unit onto the highly reducing polyketide synthase pks2, followed by oxaloacetate extension and product release to generate a tricarboxylic acid containing product. The phenylalanine ammonia lyase (PAL) M7 and the acyl-CoA ligase M9 are involved in transforming phenylalanine into benzoyl-CoA. The citrate synthase-like protein R3 is involved in connecting the C-alpha-carbons of the hexaketide chain and oxaloacetate to afford the tricarboxylic acid unit. The potential hydrolytic enzymes, M8 and M10, are in close proximity to pks2 and may participate in product release. On the other side, the tetraketide arm is synthesized by a the squalestatin tetraketide synthase pks1 and enzymatically esterified to the core in the last biosynthetic step, by the acetyltransferase M4. The biosynthesis of the tetraketide must involve 3 rounds of chain extension. After the first and second rounds methyl-transfer occurs, and in all rounds of extension the ketoreductase and dehydratase are active. The enoyl reductase and C-MeT of pks1 are not active in the final round of extension. The acetyltransferase M4 appears to have a broad substrate selectivity for its acyl CoA substrate, allowing the in vitro synthesis of novel squalestatins. The biosynthesis of SQS1 requires several oxidative steps likely performed by oxidoreductases M1, R1 and R2. Finally, in support of the identification of the cluster as being responsible for SQS1 production, the cluster contains a gene encoding a putative squalene synthase (SS) R6, suggesting a likely mechanism for self-resistance. The polypeptide is Citrate synthase-like protein (Phoma sp. (strain ATCC 20986 / MF5453)).